The following is a 33-amino-acid chain: Brevinin-2GRb (33 aa).

As to expression, expressed by the skin glands.

It localises to the secreted. Its function is as follows. Antimicrobial peptide active against the Gram-positive bacterium S.aureus (MIC=25 uM) and against the Gram-negative bacteria E.coli (MIC=6 uM). Has no antifungal activity against C.albicans. Shows hemolytic activity against human erythrocytes only at high concentrations (LC(50)=180 uM). The chain is Brevinin-2GRb from Odorrana grahami (Yunnanfu frog).